The following is a 362-amino-acid chain: Prostaglandin F2-alpha receptor (362 aa).

The Extracellular portion of the chain corresponds to Met1 to Ser31. N-linked (GlcNAc...) asparagine glycosylation is found at Asn4 and Asn19. The helical transmembrane segment at Phe32–Ala54 threads the bilayer. Over Tyr55–Leu69 the chain is Cytoplasmic. Residues Ala70–Phe90 traverse the membrane as a helical segment. Over Val91–Ser109 the chain is Extracellular. Cysteines 108 and 186 form a disulfide. Residues Ile110–Ile131 traverse the membrane as a helical segment. At Glu132–Val152 the chain is on the cytoplasmic side. The helical transmembrane segment at Lys153–Arg175 threads the bilayer. The Extracellular portion of the chain corresponds to Asp176 to Asp198. A helical membrane pass occupies residues Arg199–Gly224. At Ile225 to Gln250 the chain is on the cytoplasmic side. A helical membrane pass occupies residues Leu251–Val267. Topologically, residues Thr268–Arg285 are extracellular. A helical transmembrane segment spans residues Thr286–Leu307. Topologically, residues Arg308–Thr362 are cytoplasmic.

This sequence belongs to the G-protein coupled receptor 1 family.

Its subcellular location is the cell membrane. In terms of biological role, receptor for prostaglandin F2-alpha (PGF2-alpha). The activity of this receptor is mediated by G proteins which activate a phosphatidylinositol-calcium second messenger system. Initiates luteolysis in the corpus luteum. This Bos taurus (Bovine) protein is Prostaglandin F2-alpha receptor (PTGFR).